The primary structure comprises 286 residues: ATP synthase gamma chain (286 aa).

It belongs to the ATPase gamma chain family. As to quaternary structure, F-type ATPases have 2 components, CF(1) - the catalytic core - and CF(0) - the membrane proton channel. CF(1) has five subunits: alpha(3), beta(3), gamma(1), delta(1), epsilon(1). CF(0) has three main subunits: a, b and c.

It localises to the cell membrane. Functionally, produces ATP from ADP in the presence of a proton gradient across the membrane. The gamma chain is believed to be important in regulating ATPase activity and the flow of protons through the CF(0) complex. This chain is ATP synthase gamma chain, found in Ureaplasma parvum serovar 3 (strain ATCC 27815 / 27 / NCTC 11736).